The primary structure comprises 87 residues: uncharacterized protein (87 aa).

This is an uncharacterized protein from Bacillus phage phi105 (Bacteriophage phi-105).